The following is a 364-amino-acid chain: Melatonin receptor type 1B (364 aa).

The Extracellular portion of the chain corresponds to 1 to 42 (MPENSSIPNCCEASGLAARPSWSGSAGARPPVTARAPWVAPM). Asn-4 carries N-linked (GlcNAc...) asparagine glycosylation. The helical transmembrane segment at 43–63 (LSTVVVVTTAVDFVGNLLVIL) threads the bilayer. The Cytoplasmic portion of the chain corresponds to 64–76 (SVLRNRKLRNAGN). The helical transmembrane segment at 77-97 (LFVVSLALADLVIALYPYPLI) threads the bilayer. Residues 98–115 (LVAIIRDGWVLGEAHCKA) lie on the Extracellular side of the membrane. Cysteines 113 and 190 form a disulfide. The chain crosses the membrane as a helical span at residues 116 to 136 (SAFVMGLSVIGSVFNITAIAI). Residues 137–155 (NRYCCICHSTTYHRVCSHW) are Cytoplasmic-facing. Residues 156–176 (YTPIYISLVWLLTLVALVPNF) traverse the membrane as a helical segment. Residues 177–200 (FVGSLEYDPRIYSCTFIQTASTQY) lie on the Extracellular side of the membrane. A helical membrane pass occupies residues 201 to 221 (TAAVVAIHFLLPMAVVSFCYL). Over 222–253 (RIWVLVLQARRKAKATRKLRLRPSDLRSFLTM) the chain is Cytoplasmic. A helical membrane pass occupies residues 254-274 (FAVFVVFAICWAPLNCIGLAV). Over 275 to 287 (AINPEAMALQVPE) the chain is Extracellular. Residues 288-308 (GLFVTSYFLAYFNSCLNAIVY) form a helical membrane-spanning segment. The Cytoplasmic portion of the chain corresponds to 309–364 (GLLNQNFRREYKRILLAIWNTRRCIQHASKHCLTEERQGPTPPAARATVPVKEGAL). The tract at residues 343 to 364 (EERQGPTPPAARATVPVKEGAL) is disordered. Positions 352–364 (AARATVPVKEGAL) are enriched in low complexity.

This sequence belongs to the G-protein coupled receptor 1 family.

The protein resides in the cell membrane. Functionally, high affinity receptor for melatonin. The activity of this receptor is mediated by pertussis toxin sensitive G proteins that inhibits adenylate cyclase activity. This is Melatonin receptor type 1B (Mtnr1b) from Mus musculus (Mouse).